Here is a 363-residue protein sequence, read N- to C-terminus: Adenosine 3'-phospho 5'-phosphosulfate transporter 2 (363 aa).

10 helical membrane-spanning segments follow: residues 39–59 (WLQFVLLSGAIFILYLGYGYM), 63–83 (IFKLPGMKPFGWTLTLIQFVI), 106–126 (IYGVIAFFTVATMGLSNASVG), 131–151 (PTQVIFKCCKLIPVLIGGILI), 157–177 (GWIDISAAILMSLGIIMFTLA), 187–206 (SRGYIMISGALLADAVIGNI), 231–251 (VFIFTYVVLSGEIFSAIPFFL), 257–277 (TFGYALIFSFLGYLGVNVVLT), 281–301 (VFGALVAVTVTTLRKALTIIL), and 310–330 (FTIEYVYAGSVVMLAIYLNLY).

The protein belongs to the nucleotide-sugar transporter family. SLC35B subfamily.

Its subcellular location is the golgi apparatus membrane. Mediates the transport of adenosine 3'-phospho 5'-phosphosulfate (PAPS), from cytosol into Golgi. PAPS is a universal sulfuryl donor for sulfation events that take place in the Golgi. This is Adenosine 3'-phospho 5'-phosphosulfate transporter 2 (pst-2) from Caenorhabditis briggsae.